The chain runs to 553 residues: Protein YloV (553 aa).

The 193-residue stretch at 9 to 201 (RTFAEMILAG…LLCVYEGFLA (193 aa)) folds into the DhaL domain.

This Bacillus subtilis (strain 168) protein is Protein YloV (yloV).